A 910-amino-acid polypeptide reads, in one-letter code: Adhesion G-protein coupled receptor F1 (910 aa).

An N-terminal signal peptide occupies residues 1-19; that stretch reads MKVGVLWLISFFTFTDGHG. Residues 20–583 lie on the Extracellular side of the membrane; the sequence is GFLGKNDGIK…SPFVPSTIFP (564 aa). N-linked (GlcNAc...) asparagine glycans are attached at residues Asn-139, Asn-168, Asn-205, Asn-282, Asn-310, Asn-317, Asn-329, Asn-354, Asn-368, Asn-389, Asn-410, Asn-423, Asn-437, Asn-455, Asn-512, Asn-528, and Asn-553. The SEA domain maps to 148 to 256; that stretch reads ERTKIWGTFK…GSFRVFGKAQ (109 aa). Disulfide bonds link Cys-257-Cys-287 and Cys-275-Cys-299. Residues 437-579 enclose the GAIN-B domain; sequence NKSQLKRGYS…SILMSPFVPS (143 aa). 2 disulfides stabilise this stretch: Cys-534/Cys-561 and Cys-549/Cys-563. The segment at 534–579 is GPS; that stretch reads CVFWDFSHLQWNDAGCHLVNETQDIVTCQCTHLTSFSILMSPFVPS. A stachel region spans residues 568-576; it reads SFSILMSPF. Residues 584–609 form a helical membrane-spanning segment; the sequence is VVKWITYVGLGISIGSLILCLIIEAL. The Cytoplasmic segment spans residues 610 to 621; it reads FWKQIKKSQTSH. The chain crosses the membrane as a helical span at residues 622–646; that stretch reads TRRICMVNIALSLLIADVWFIVGAT. Residues 647–658 are Extracellular-facing; that stretch reads VDTTVNPSGVCT. The cysteines at positions 657 and 733 are disulfide-linked. A helical membrane pass occupies residues 659–684; it reads AAVFFTHFFYLSLFFWMLMLGILLAY. The Cytoplasmic segment spans residues 685–696; it reads RIILVFHHMAQH. Residues 697–719 traverse the membrane as a helical segment; the sequence is LMMAVGFCLGYGCPLIISVITIA. At 720–742 the chain is on the extracellular side; the sequence is VTQPSNTYKRKDVCWLNWSNGSK. Residues Asn-736 and Asn-739 are each glycosylated (N-linked (GlcNAc...) asparagine). The helical transmembrane segment at 743-767 threads the bilayer; sequence PLLAFVVPALAIVAVNFVVVLLVLT. The Cytoplasmic segment spans residues 768–784; the sequence is KLWRPTVGERLSRDDKA. The helical transmembrane segment at 785-813 threads the bilayer; sequence TIIRVGKSLLILTPLLGLTWGFGIGTIVD. The Extracellular segment spans residues 814–816; that stretch reads SQN. The chain crosses the membrane as a helical span at residues 817–842; it reads LAWHVIFALLNAFQGFFILCFGILLD. Topologically, residues 843–910 are cytoplasmic; that stretch reads SKLRQLLFNK…IMLTQFVSNE (68 aa).

It belongs to the G-protein coupled receptor 2 family. Adhesion G-protein coupled receptor (ADGR) subfamily. In terms of assembly, heterodimer of 2 chains generated by proteolytic processing; the large extracellular N-terminal fragment and the membrane-bound C-terminal fragment predominantly remain associated and non-covalently linked. In terms of processing, autoproteolytically processed at the GPS region of the GAIN-B domain; this cleavage modulates receptor activity. Post-translationally, glycosylated. Glycosylation at Asn-389 is required for secretion or folding. In terms of tissue distribution, mainly expressed in the kidney. Up-regulated in lung adenocarcinomas and prostate cancers.

It is found in the cell membrane. The protein localises to the secreted. Its activity is regulated as follows. Forms a heterodimer of 2 chains generated by proteolytic processing that remain associated through non-covalent interactions mediated by the GAIN-B domain. In the inactivated receptor, the Stachel sequence (also named stalk) is embedded in the GAIN-B domain, where it adopts a beta-strand conformation. On activation, the Stachel moves into the 7 transmembrane region and adopts a twisted hook-shaped configuration that forms contacts within the receptor, leading to coupling of a G-alpha protein, which activates signaling. The cleaved GAIN-B and N-terminal domains can then dissociate from the rest of the receptor. Adhesion G-protein coupled receptor (aGPCR) for N-docosahexaenoylethanolamine (synaptamide), an omega-3 fatty acid lipid highly enriched in the brain. Ligand binding causes a conformation change that triggers signaling via guanine nucleotide-binding proteins (G proteins) and modulates the activity of downstream effectors, such as adenylate cyclase. ADGRF1 is coupled to G(s) G proteins and mediates activation of adenylate cyclase activity. Also able to couple to G(q), G(i) and G(12)/G(13) G proteins; additional evidence is however required to confirm this result in vivo. Involved in the development of neurons and cognitive function. In liver, involved in fat accumulation. In Homo sapiens (Human), this protein is Adhesion G-protein coupled receptor F1.